We begin with the raw amino-acid sequence, 414 residues long: Glucose-1-phosphate adenylyltransferase (414 aa).

Alpha-D-glucose 1-phosphate is bound by residues Tyr99, Gly164, 181–182 (EK), and Ser199.

The protein belongs to the bacterial/plant glucose-1-phosphate adenylyltransferase family. As to quaternary structure, homotetramer.

It carries out the reaction alpha-D-glucose 1-phosphate + ATP + H(+) = ADP-alpha-D-glucose + diphosphate. It participates in glycan biosynthesis; glycogen biosynthesis. In terms of biological role, involved in the biosynthesis of ADP-glucose, a building block required for the elongation reactions to produce glycogen. Catalyzes the reaction between ATP and alpha-D-glucose 1-phosphate (G1P) to produce pyrophosphate and ADP-Glc. The polypeptide is Glucose-1-phosphate adenylyltransferase (Bifidobacterium longum (strain DJO10A)).